Consider the following 1218-residue polypeptide: Coatomer subunit alpha-3 (1218 aa).

WD repeat units follow at residues 7-48 (TKSN…DRFD), 49-88 (EHDG…CLFT), 91-132 (GHLD…AVLT), 133-172 (GHNH…KKTV), 202-241 (GHDR…AWEV), 246-285 (GHMN…GIQT), 288-326 (REHD…PAFS), 363-404 (SLNQ…AGRT), and 450-489 (PLPI…GELQ). The interval 854–893 (AMANGGDGFDAEEGEANEEDGEEGGWDLEDLELPPEAETP) is disordered. The segment covering 862 to 888 (FDAEEGEANEEDGEEGGWDLEDLELPP) has biased composition (acidic residues).

In terms of assembly, oligomeric complex that consists of at least the alpha, beta, beta', gamma, delta, epsilon and zeta subunits.

It is found in the cytoplasm. Its subcellular location is the golgi apparatus membrane. It localises to the cytoplasmic vesicle. The protein localises to the COPI-coated vesicle membrane. The coatomer is a cytosolic protein complex that binds to dilysine motifs and reversibly associates with Golgi non-clathrin-coated vesicles, which further mediate biosynthetic protein transport from the ER, via the Golgi up to the trans Golgi network. Coatomer complex is required for budding from Golgi membranes, and is essential for the retrograde Golgi-to-ER transport of dilysine-tagged proteins. The protein is Coatomer subunit alpha-3 of Oryza sativa subsp. japonica (Rice).